Reading from the N-terminus, the 204-residue chain is MTKYTFKPKDFKAFNVEGLDARMEALNEYIRPQLHELGEYFSDFFTSQTGETFYPHVAKHARRSVNAPKDTWVAFATSKRGYKMLPHFQIGMFEDQLFVMFGIMHEAKDKATRAKVFERKFKAIQQLPDDYRVCLDHMKPDKPFIKDLTDDDLKEAIQRAINVKKGEFFIARAITPQDKRLKSDKAFIAFLEETFDQFLPFYSA.

It belongs to the UPF0637 family.

In Staphylococcus aureus (strain N315), this protein is UPF0637 protein SA0957.